The following is a 503-amino-acid chain: Na(+)-translocating NADH-quinone reductase subunit B (503 aa).

A run of 5 helical transmembrane segments spans residues Met55–Leu75, Pro85–Ser105, Ile120–Ile142, Ile161–Ile181, and Phe186–Phe206. Thr248 carries the FMN phosphoryl threonine modification. 5 consecutive transmembrane segments (helical) span residues Thr361–Trp381, Phe387–Gly407, Phe417–Met437, Trp452–Tyr472, and Gly475–Leu495.

This sequence belongs to the NqrB/RnfD family. As to quaternary structure, composed of six subunits; NqrA, NqrB, NqrC, NqrD, NqrE and NqrF. FMN is required as a cofactor.

It localises to the cell inner membrane. It catalyses the reaction a ubiquinone + n Na(+)(in) + NADH + H(+) = a ubiquinol + n Na(+)(out) + NAD(+). NQR complex catalyzes the reduction of ubiquinone-1 to ubiquinol by two successive reactions, coupled with the transport of Na(+) ions from the cytoplasm to the periplasm. NqrA to NqrE are probably involved in the second step, the conversion of ubisemiquinone to ubiquinol. This chain is Na(+)-translocating NADH-quinone reductase subunit B, found in Chlamydia muridarum (strain MoPn / Nigg).